We begin with the raw amino-acid sequence, 299 residues long: 4-diphosphocytidyl-2-C-methyl-D-erythritol kinase (299 aa).

Residue Lys16 is part of the active site. 101-111 (PVAAGIGGGSA) lines the ATP pocket. Residue Asp143 is part of the active site.

It belongs to the GHMP kinase family. IspE subfamily.

The enzyme catalyses 4-CDP-2-C-methyl-D-erythritol + ATP = 4-CDP-2-C-methyl-D-erythritol 2-phosphate + ADP + H(+). Its pathway is isoprenoid biosynthesis; isopentenyl diphosphate biosynthesis via DXP pathway; isopentenyl diphosphate from 1-deoxy-D-xylulose 5-phosphate: step 3/6. Its function is as follows. Catalyzes the phosphorylation of the position 2 hydroxy group of 4-diphosphocytidyl-2C-methyl-D-erythritol. The sequence is that of 4-diphosphocytidyl-2-C-methyl-D-erythritol kinase from Rhodopseudomonas palustris (strain ATCC BAA-98 / CGA009).